A 481-amino-acid chain; its full sequence is CUGBP Elav-like family member 6 (481 aa).

Positions 1 to 12 (MAAAPGGSAQPA) are enriched in low complexity. The interval 1–34 (MAAAPGGSAQPAGPGPRLGFSTADSGVGMSGLNP) is disordered. RRM domains lie at 46-127 (IKLF…PAAS), 134-214 (RKLF…LADT), and 396-474 (CNLF…LKRP).

Belongs to the CELF/BRUNOL family. Expressed mainly in kidney, brain and testis and present in other tissues albeit at lower levels. Also expressed in fetal kidney.

The protein resides in the nucleus. It is found in the cytoplasm. Its function is as follows. RNA-binding protein implicated in the regulation of pre-mRNA alternative splicing. Mediates exon inclusion and/or exclusion in pre-mRNA that are subject to tissue-specific and developmentally regulated alternative splicing. Specifically activates exon 5 inclusion of TNNT2 in a muscle-specific splicing enhancer (MSE)-dependent manner. Promotes also exon exclusion of INSR pre-mRNA. In Homo sapiens (Human), this protein is CUGBP Elav-like family member 6 (CELF6).